A 368-amino-acid polypeptide reads, in one-letter code: 1-aminocyclopropane-1-carboxylate oxidase (368 aa).

A Fe2OG dioxygenase domain is found at 177-307; the sequence is PFILMGLLHY…RFSIPFFLDP (131 aa). Residues 191-226 are disordered; the sequence is HQEQEEEQEDDESNNGGKKSPNPDESKKPEVEKFGT. Acidic residues predominate over residues 194 to 203; sequence QEEEQEDDES. Over residues 211–223 the composition is skewed to basic and acidic residues; it reads PNPDESKKPEVEK. 3 residues coordinate Fe cation: histidine 229, aspartate 231, and histidine 287. Arginine 298 contacts 2-oxoglutarate.

The protein belongs to the iron/ascorbate-dependent oxidoreductase family. It depends on Fe(2+) as a cofactor.

It carries out the reaction 1-aminocyclopropane-1-carboxylate + L-ascorbate + O2 = ethene + L-dehydroascorbate + hydrogen cyanide + CO2 + 2 H2O. It participates in alkene biosynthesis; ethylene biosynthesis via S-adenosyl-L-methionine; ethylene from S-adenosyl-L-methionine: step 2/2. Functionally, involved in ethylene biosynthesis. Overexpression induces overproduction of ethylene. This Dictyostelium discoideum (Social amoeba) protein is 1-aminocyclopropane-1-carboxylate oxidase (aco).